A 75-amino-acid polypeptide reads, in one-letter code: Mating pheromone Er-10 (75 aa).

The signal sequence occupies residues 1–19; it reads MNKLAILAIIAMVLFSANA. A propeptide spanning residues 20 to 37 is cleaved from the precursor; it reads FRFQSRIRSNVEAKTETR. Cystine bridges form between Cys40–Cys56, Cys47–Cys74, and Cys52–Cys64.

Homodimer.

The protein localises to the secreted. In terms of biological role, mating ciliate pheromones (or gamones) are diffusible extracellular communication signals that distinguish different intraspecific classes of cells commonly referred to as 'mating types'. They prepare the latter for conjugation by changing their cell surface properties. This Euplotes raikovi protein is Mating pheromone Er-10 (MAT10).